Reading from the N-terminus, the 199-residue chain is Putative inactive ribonuclease 11 (199 aa).

Positions 1 to 16 are cleaved as a signal peptide; sequence METFPLLLLSLGLVLA. Asn61 carries N-linked (GlcNAc...) asparagine glycosylation. Residue His82 is the Proton acceptor of the active site. 2 N-linked (GlcNAc...) asparagine glycosylation sites follow: Asn89 and Asn111. 2 cysteine pairs are disulfide-bonded: Cys98–Cys158 and Cys114–Cys169. 115 to 119 serves as a coordination point for substrate; sequence KWSNN.

Belongs to the pancreatic ribonuclease family.

The protein resides in the secreted. This chain is Putative inactive ribonuclease 11 (RNASE11), found in Homo sapiens (Human).